The chain runs to 429 residues: Forkhead box protein A1-A (429 aa).

A DNA-binding region (fork-head) is located at residues Lys159 to Lys253. Residues Glu258 to Ser274 show a composition bias toward basic and acidic residues. The disordered stretch occupies residues Glu258–Ser341. Low complexity predominate over residues Ser287–Gln304. Residues Pro325–Ser336 show a composition bias toward polar residues.

At neurula stage, expressed in the notochord but not in the neural floor plate. During tailbud stages, expressed in the neural floor plate. At stage 35, expressed in the rhombencephalon, mesencephalon, pharyngeal pouches, foregut and pronephros. At stage 44, expressed in a region of the gut on the right hand side of the embryo. Expressed in the adult lung and liver.

The protein resides in the nucleus. In terms of biological role, probable transcription factor. This is Forkhead box protein A1-A (foxa1-a) from Xenopus laevis (African clawed frog).